The following is a 391-amino-acid chain: 3-ketoacyl-CoA thiolase (391 aa).

C95 functions as the Acyl-thioester intermediate in the catalytic mechanism. Residues H347 and C377 each act as proton acceptor in the active site.

The protein belongs to the thiolase-like superfamily. Thiolase family. Heterotetramer of two alpha chains (FadB) and two beta chains (FadA).

The protein localises to the cytoplasm. The catalysed reaction is an acyl-CoA + acetyl-CoA = a 3-oxoacyl-CoA + CoA. It participates in lipid metabolism; fatty acid beta-oxidation. Functionally, catalyzes the final step of fatty acid oxidation in which acetyl-CoA is released and the CoA ester of a fatty acid two carbons shorter is formed. The protein is 3-ketoacyl-CoA thiolase of Alcanivorax borkumensis (strain ATCC 700651 / DSM 11573 / NCIMB 13689 / SK2).